The following is a 2871-amino-acid chain: Fibrillin-1 (2871 aa).

A signal peptide spans 1–24; the sequence is MRRGGLLEVALGFTVLLASYTSHG. The propeptide occupies 25-44; the sequence is ADTNLEAGNVKETRANRAKR. Residues 45–81 form a fibrillin unique N-terminal (FUN) domain region; sequence RGGGGHDALKGPNVCGSRYNAYCCPGWKTLPGGNQCI. Positions 45 to 450 are N-terminal domain; sequence RGGGGHDALK…PPRVLPVNVT (406 aa). Disulfide bonds link Cys-59-Cys-68, Cys-67-Cys-80, Cys-85-Cys-94, Cys-89-Cys-100, Cys-102-Cys-111, Cys-119-Cys-129, Cys-123-Cys-134, Cys-136-Cys-145, Cys-150-Cys-160, Cys-154-Cys-166, and Cys-168-Cys-177. 3 consecutive EGF-like domains span residues 81-112, 115-146, and 147-178; these read IVPICRHSCGDGFCSRPNMCTCPSGQIAPSCG, SIQHCNIRCMNGGSCSDDHCLCQKGYIGTHCG, and QPVCESGCLNGGRCVAPNRCACTYGFTGPQCE. An interaction with MFAP4 region spans residues 119–329; that stretch reads CNIRCMNGGS…YTSPDGTRCI (211 aa). Positions 184 to 236 constitute a TB 1 domain; it reads GPCFTVISNQMCQGQLSGIVCTKTLCCATVGRAWGHPCEMCPAQPHPCRRGFI. Residues 195–221 are hybrid domain 1; that stretch reads CQGQLSGIVCTKTLCCATVGRAWGHPC. The 42-residue stretch at 246–287 folds into the EGF-like 4; calcium-binding domain; that stretch reads DVDECQAIPGLCQGGNCINTVGSFECKCPAGHKFNEVSQKCE. 6 cysteine pairs are disulfide-bonded: Cys-250–Cys-262, Cys-257–Cys-271, Cys-273–Cys-286, Cys-292–Cys-304, Cys-299–Cys-313, and Cys-315–Cys-328. The O-linked (Glc) serine glycan is linked to Ser-268. The EGF-like 5; calcium-binding domain occupies 288 to 329; that stretch reads DIDECSTIPGICDGGECTNTVSSYFCKCPPGFYTSPDGTRCI. Residues 334–389 enclose the TB 2 domain; that stretch reads GYCYTALANGRCSNQLPQSITKMQCCCDVGRCWSPGVTVAPEMCPIRATEDFNKLC. N-linked (GlcNAc...) asparagine glycosylation is present at Asn-448. The EGF-like 6 domain occupies 449-489; that stretch reads VTDYCQLFRYLCQNGRCIPTPGSYRCECNKGFQLDLRGECI. Disulfide bonds link Cys-453–Cys-465, Cys-460–Cys-474, Cys-476–Cys-488, Cys-494–Cys-504, Cys-499–Cys-513, Cys-515–Cys-528, Cys-534–Cys-546, Cys-541–Cys-555, Cys-557–Cys-570, Cys-576–Cys-587, Cys-582–Cys-596, Cys-598–Cys-611, Cys-617–Cys-628, Cys-623–Cys-637, and Cys-639–Cys-652. A glycan (O-linked (Glc) serine) is linked at Ser-471. The EGF-like 7; calcium-binding domain maps to 490–529; the sequence is DVDECEKNPCAGGECINTQGSYTCQCRPGYQSTLTRTECR. A glycan (O-linked (Glc) serine) is linked at Ser-510. The EGF-like 8; calcium-binding domain maps to 530-571; it reads DIDECLQNGRICNNGRCINTDGSFHCVCNAGFHVTRDGKNCE. The EGF-like 9; calcium-binding domain maps to 572 to 612; it reads DMDECSIRNMCLNGMCINEDGSFKCICKPGFQLASDGRYCK. The EGF-like 10; calcium-binding domain occupies 613–653; it reads DINECETPGICMNGRCVNTDGSYRCECFPGLAVGLDGRVCV. The TB 3 domain maps to 659 to 711; the sequence is STCYGGYKRGQCVKPLFGAVTKSECCCASTEYAFGEPCQPCPSQNSAEYQALC. The EGF-like 11; calcium-binding domain occupies 723–764; the sequence is DINECALDPDICPNGICENLRGTYKCICNSGYEVDSTGKNCV. Disulfide bonds link Cys-727–Cys-739, Cys-734–Cys-748, Cys-750–Cys-763, Cys-769–Cys-781, Cys-776–Cys-790, Cys-792–Cys-805, Cys-811–Cys-821, Cys-816–Cys-830, Cys-832–Cys-845, Cys-853–Cys-875, Cys-862–Cys-887, Cys-876–Cys-890, Cys-896–Cys-908, Cys-914–Cys-926, Cys-921–Cys-935, and Cys-937–Cys-950. Positions 765–806 constitute an EGF-like 12; calcium-binding domain; the sequence is DINECVLNSLLCDNGQCRNTPGSFVCTCPKGFIYKPELKTCE. One can recognise an EGF-like 13; calcium-binding domain in the interval 807–846; the sequence is DIDECESSPCINGVCKNSPGSFICECSSESTLDPTKTICI. Residues 851 to 902 form the TB 4 domain; sequence GTCWQTVIDGRCEININGATLKSQCCSSLGAAWGSPCTPCQVDPICGKGYSR. Residues 862–887 form a hybrid domain 2 region; it reads CEININGATLKSQCCSSLGAAWGSPC. An EGF-like 14; calcium-binding domain is found at 910–951; sequence DIDECEVFPGVCKNGLCVNSKGSFKCQCPSGMTLDATGRICL. A TB 5 domain is found at 956 to 1008; sequence ETCFLRYEDEECTLPVAGRHRMDACCCSVGAAWGTEECEECPVRNTPEYEELC. The region spanning 1028-1069 is the EGF-like 15; calcium-binding domain; it reads DINECKMIPNLCTHGKCRNTIGSFKCRCDSGFALDSEERNCT. 46 disulfide bridges follow: Cys-1032/Cys-1044, Cys-1039/Cys-1053, Cys-1055/Cys-1068, Cys-1074/Cys-1086, Cys-1081/Cys-1095, Cys-1097/Cys-1111, Cys-1117/Cys-1129, Cys-1124/Cys-1138, Cys-1140/Cys-1153, Cys-1159/Cys-1171, Cys-1166/Cys-1180, Cys-1182/Cys-1195, Cys-1201/Cys-1212, Cys-1208/Cys-1221, Cys-1223/Cys-1236, Cys-1242/Cys-1254, Cys-1249/Cys-1263, Cys-1265/Cys-1278, Cys-1284/Cys-1296, Cys-1291/Cys-1305, Cys-1307/Cys-1320, Cys-1326/Cys-1339, Cys-1333/Cys-1348, Cys-1350/Cys-1361, Cys-1367/Cys-1380, Cys-1374/Cys-1389, Cys-1391/Cys-1402, Cys-1408/Cys-1420, Cys-1415/Cys-1429, Cys-1431/Cys-1444, Cys-1450/Cys-1461, Cys-1456/Cys-1470, Cys-1472/Cys-1485, Cys-1491/Cys-1502, Cys-1497/Cys-1511, Cys-1513/Cys-1526, Cys-1534/Cys-1562, Cys-1549/Cys-1574, Cys-1563/Cys-1577, Cys-1564/Cys-1589, Cys-1610/Cys-1622, Cys-1617/Cys-1631, Cys-1633/Cys-1646, Cys-1652/Cys-1663, Cys-1658/Cys-1672, and Cys-1674/Cys-1687. Asn-1067 carries N-linked (GlcNAc...) asparagine glycosylation. One can recognise an EGF-like 16; calcium-binding domain in the interval 1070 to 1112; the sequence is DIDECRISPDLCGRGQCVNTPGDFECKCDEGYESGFMMMKNCM. Residues 1113–1154 enclose the EGF-like 17; calcium-binding domain; the sequence is DIDECQRDPLLCRGGVCLNTEGSYRCECPPGHQLAPNISACI. Ser-1135 carries an O-linked (Glc) serine glycan. Asn-1149 carries N-linked (GlcNAc...) asparagine glycosylation. An EGF-like 18; calcium-binding domain is found at 1155-1196; the sequence is DINECELSAHLCPHGRCVNLIGKYQCACNPGYHSTPDRLFCV. The region spanning 1197–1237 is the EGF-like 19; calcium-binding domain; sequence DIDECSIMNGGCETFCTNSEGSYECSCQPGFALMPDQRSCT. O-linked (Glc) serine glycosylation is present at Ser-1218. Positions 1238 to 1279 constitute an EGF-like 20; calcium-binding domain; that stretch reads DIDECEDNPNICDGGQCTNIPGEYRCLCYDGFMASEDMKTCV. The EGF-like 21; calcium-binding domain maps to 1280-1321; it reads DVNECDLNPNICLSGTCENTKGSFICHCDMGYSGKKGKTGCT. O-linked (Glc) serine glycosylation is present at Ser-1302. One can recognise an EGF-like 22; calcium-binding domain in the interval 1322–1362; sequence DINECEIGAHNCDRHAVCTNTAGSFKCSCSPGWIGDGIKCT. Ser-1345 is a glycosylation site (O-linked (Glc) serine). The 41-residue stretch at 1363 to 1403 folds into the EGF-like 23; calcium-binding domain; it reads DLDECSNGTHMCSQHADCKNTMGSYRCLCKEGYTGDGFTCT. An N-linked (GlcNAc...) asparagine glycan is attached at Asn-1369. Ser-1386 carries an O-linked (Glc) serine glycan. An EGF-like 24; calcium-binding domain is found at 1404–1445; the sequence is DLDECSENLNLCGNGQCLNAPGGYRCECDMGFVPSADGKACE. Residues 1446–1486 form the EGF-like 25; calcium-binding domain; it reads DIDECSLPNICVFGTCHNLPGLFRCECEIGYELDRSGGNCT. N-linked (GlcNAc...) asparagine glycosylation is present at Asn-1484. The region spanning 1487-1527 is the EGF-like 26; calcium-binding domain; sequence DVNECLDPTTCISGNCVNTPGSYTCDCPPDFELNPTRVGCV. Residue Ser-1508 is glycosylated (O-linked (Glc) serine). The interval 1528 to 2731 is C-terminal domain; the sequence is DTRSGNCYLD…GYPKRGRKRR (1204 aa). The region spanning 1532-1589 is the TB 6 domain; the sequence is GNCYLDIRPRGDNGDTACSNEIGVGVSKASCCCSLGKAWGTPCELCPPVNTSEYKILC. A Cell attachment site motif is present at residues 1541–1543; that stretch reads RGD. Asn-1581 carries an N-linked (GlcNAc...) asparagine glycan. Residues 1606–1647 form the EGF-like 27; calcium-binding domain; it reads DIDECQELPGLCQGGKCINTFGSFQCRCPTGYYLNEDTRVCD. O-linked (Glc) serine glycosylation occurs at Ser-1628. The region spanning 1648-1688 is the EGF-like 28; calcium-binding domain; it reads DVNECETPGICGPGTCYNTVGNYTCICPPDYMQVNGGNNCM. The N-linked (GlcNAc...) asparagine glycan is linked to Asn-1669. The TB 7 domain maps to 1693–1748; sequence SLCYRNYYADNQTCDGELLFNMTKKMCCCSYNIGRAWNKPCEQCPIPSTDEFATLC. Residues Asn-1703 and Asn-1713 are each glycosylated (N-linked (GlcNAc...) asparagine). The EGF-like 29; calcium-binding domain maps to 1766–1807; sequence DIDECREIPGVCENGVCINMVGSFRCECPVGFFYNDKLLVCE. 40 disulfides stabilise this stretch: Cys-1770/Cys-1782, Cys-1777/Cys-1791, Cys-1793/Cys-1806, Cys-1812/Cys-1824, Cys-1818/Cys-1833, Cys-1835/Cys-1847, Cys-1853/Cys-1865, Cys-1860/Cys-1874, Cys-1876/Cys-1889, Cys-1895/Cys-1905, Cys-1900/Cys-1914, Cys-1916/Cys-1928, Cys-1934/Cys-1947, Cys-1942/Cys-1956, Cys-1958/Cys-1971, Cys-1977/Cys-1989, Cys-1984/Cys-1998, Cys-2000/Cys-2011, Cys-2017/Cys-2029, Cys-2024/Cys-2038, Cys-2040/Cys-2053, Cys-2061/Cys-2083, Cys-2070/Cys-2096, Cys-2084/Cys-2099, Cys-2085/Cys-2111, Cys-2131/Cys-2142, Cys-2137/Cys-2151, Cys-2153/Cys-2164, Cys-2170/Cys-2181, Cys-2176/Cys-2190, Cys-2192/Cys-2204, Cys-2210/Cys-2221, Cys-2217/Cys-2230, Cys-2232/Cys-2245, Cys-2251/Cys-2265, Cys-2258/Cys-2274, Cys-2276/Cys-2289, Cys-2295/Cys-2307, Cys-2302/Cys-2316, and Cys-2318/Cys-2331. Positions 1808–1848 constitute an EGF-like 30; calcium-binding domain; sequence DIDECQNGPVCQRNAECINTAGSYRCDCKPGYRFTSTGQCN. A glycan (O-linked (Glc) serine) is linked at Ser-1830. In terms of domain architecture, EGF-like 31; calcium-binding spans 1849–1890; it reads DRNECQEIPNICSHGQCIDTVGSFYCLCHTGFKTNADQTMCL. O-linked (Glc) serine glycosylation occurs at Ser-1871. Residues 1891–1929 enclose the EGF-like 32; calcium-binding domain; that stretch reads DINECERDACGNGTCRNTIGSFNCRCNHGFILSHNNDCI. N-linked (GlcNAc...) asparagine glycosylation occurs at Asn-1902. O-linked (Glc) serine glycosylation occurs at Ser-1911. The EGF-like 33; calcium-binding domain maps to 1930-1972; sequence DVDECATGNGNLCRNGQCINTVGSFQCQCNEGYEVAPDGRTCV. O-linked (Glc) serine glycosylation occurs at Ser-1953. One can recognise an EGF-like 34; calcium-binding domain in the interval 1973 to 2012; the sequence is DINECLLDPRKCAPGTCQNLDGSYRCICPPGYSLQNDKCE. One can recognise an EGF-like 35; calcium-binding domain in the interval 2013 to 2054; it reads DIDECVEEPEICALGTCSNTEGSFKCLCPDGFSLSSTGRRCQ. A glycan (O-linked (Glc) serine) is linked at Ser-2035. In terms of domain architecture, TB 8 spans 2059-2111; sequence SYCYAKFEGGKCSSPKSRNHSKQECCCALKGEGWGDPCELCPTEPDEAFRQIC. Asn-2077 carries an N-linked (GlcNAc...) asparagine glycan. The EGF-like 36; calcium-binding domain occupies 2127–2165; sequence DMDECKEPDVCKHGQCINTDGSYRCECPFGYILQGNECV. Residue Ser-2148 is glycosylated (O-linked (Glc) serine). An EGF-like 37; calcium-binding domain is found at 2166–2205; it reads DTDECSVGNPCGNGTCKNVIGGFECTCEEGFEPGPMMTCE. N-linked (GlcNAc...) asparagine glycosylation is present at Asn-2178. The EGF-like 38; calcium-binding domain occupies 2206–2246; the sequence is DINECAQNPLLCAFRCVNTYGSYECKCPAGYVLREDRRMCK. Residue Ser-2227 is glycosylated (O-linked (Glc) serine). One can recognise an EGF-like 39; calcium-binding domain in the interval 2247–2290; sequence DEDECEEGKHDCAEKQMECKNLIGTYLCICGPGYQRRPDGEGCV. One can recognise an EGF-like 40; calcium-binding domain in the interval 2291-2332; it reads DENECQTKPGICENGRCLNTRGSYTCECNDGFTASPNQDECL. A glycan (O-linked (Glc) serine) is linked at Ser-2313. Positions 2337-2390 constitute a TB 9 domain; that stretch reads GYCFTEVLQNMCQIGSSNRNPVTKSECCCDGGRGWGPHCEICPFQGTVAFKKLC. The 42-residue stretch at 2402-2443 folds into the EGF-like 41; calcium-binding domain; sequence DIDECKVIHDVCRNGECVNDRGSYHCICKTGYTPDITGTACV. Disulfide bonds link Cys-2406–Cys-2418, Cys-2413–Cys-2427, Cys-2429–Cys-2442, Cys-2448–Cys-2459, Cys-2455–Cys-2468, Cys-2470–Cys-2483, Cys-2489–Cys-2500, Cys-2496–Cys-2509, Cys-2511–Cys-2522, Cys-2528–Cys-2541, Cys-2535–Cys-2550, Cys-2552–Cys-2565, Cys-2571–Cys-2581, Cys-2577–Cys-2590, Cys-2592–Cys-2605, Cys-2611–Cys-2622, Cys-2617–Cys-2631, Cys-2633–Cys-2646, Cys-2652–Cys-2663, Cys-2659–Cys-2672, and Cys-2674–Cys-2686. In terms of domain architecture, EGF-like 42; calcium-binding spans 2444 to 2484; sequence DLNECNQAPKPCNFICKNTEGSYQCSCPKGYILQEDGRSCK. An O-linked (Glc) serine glycan is attached at Ser-2465. Residues 2485 to 2523 form the EGF-like 43; calcium-binding domain; it reads DLDECATKQHNCQFLCVNTIGSFTCKCPPGFTQHHTACI. In terms of domain architecture, EGF-like 44; calcium-binding spans 2524 to 2566; the sequence is DNNECTSDINLCGSKGICQNTPGSFTCECQRGFSLDPSGASCE. Ser-2547 carries an O-linked (Glc) serine glycan. The 40-residue stretch at 2567–2606 folds into the EGF-like 45; calcium-binding domain; that stretch reads DVDECEGNHRCQHGCQNIIGGYRCSCPQGYLQHYQWNQCV. In terms of domain architecture, EGF-like 46; calcium-binding spans 2607-2647; it reads DENECLSAHICGGASCHNTLGSYKCMCPAGFQYEQFSGGCQ. Ser-2628 carries an O-linked (Glc) serine glycan. The EGF-like 47; calcium-binding domain maps to 2648-2687; it reads DINECGSAQAPCSYGCSNTEGGYLCACPPGYFRIGQGHCV. 2 positions are modified to phosphoserine: Ser-2702 and Ser-2709. 3 N-linked (GlcNAc...) asparagine glycosylation sites follow: Asn-2734, Asn-2750, and Asn-2767.

It belongs to the fibrillin family. As to quaternary structure, interacts with COL16A1. Interacts with integrin alpha-V/beta-3. Interacts with ADAMTS10; this interaction promotes microfibril assembly. Interacts with THSD4; this interaction promotes fibril formation. Interacts (via N-terminal domain) with FBLN2 and FBLN5. Interacts with ELN. Forms a ternary complex with ELN and FBLN2 or FBLN5 and a significant interaction with ELN seen only in the presence of FBLN2 or FBLN5. Interacts (via N-terminal domain) with LTBP2 (via C-terminal domain) in a Ca(+2)-dependent manner. Interacts (via N-terminal domain) with LTBP1 (via C-terminal domain). Interacts with integrins ITGA5:ITGB1, ITGAV:ITGB3 and ITGAV:ITGB6. Interacts (via N-terminal domain) with BMP2, BMP4, BMP7, BMP10 and GDF5. Interacts (via N-terminal domain) with MFAP2 and MFAP5. Interacts with ADAMTSL5. Interacts with MFAP4. Interacts (via N-terminal domain) with TNFSF11 in a Ca(+2)-dependent manner. Interacts (via N-terminal domain) with EFEMP2; this interaction inhibits EFEMP2 binding to LOX and ELN. Cleavage of N- and C-terminus by furin is required for incorporation into the extracellular matrix and assembly into microfibrils. The C-terminus, which corresponds to the Asprosin chain, was initially thought to constitute a propeptide. Fibrillin-1 and Asprosin chains are still linked together during the secretion from cells, but are subsequently separated by furin, an essential step for incorporation of Fibrillin-1 into the nascent microfibrils. Post-translationally, forms intermolecular disulfide bonds either with other fibrillin-1 molecules or with other components of the microfibrils. In terms of processing, O-glycosylated on serine residues by POGLUT2 and POGLUT3 which is necessary for efficient protein secretion.

The protein resides in the secreted. It is found in the extracellular space. Its subcellular location is the extracellular matrix. Its function is as follows. Structural component of the 10-12 nm diameter microfibrils of the extracellular matrix, which conveys both structural and regulatory properties to load-bearing connective tissues. Fibrillin-1-containing microfibrils provide long-term force bearing structural support. In tissues such as the lung, blood vessels and skin, microfibrils form the periphery of the elastic fiber, acting as a scaffold for the deposition of elastin. In addition, microfibrils can occur as elastin-independent networks in tissues such as the ciliary zonule, tendon, cornea and glomerulus where they provide tensile strength and have anchoring roles. Fibrillin-1 also plays a key role in tissue homeostasis through specific interactions with growth factors, such as the bone morphogenetic proteins (BMPs), growth and differentiation factors (GDFs) and latent transforming growth factor-beta-binding proteins (LTBPs), cell-surface integrins and other extracellular matrix protein and proteoglycan components. Regulates osteoblast maturation by controlling TGF-beta bioavailability and calibrating TGF-beta and BMP levels, respectively. Negatively regulates osteoclastogenesis by binding and sequestering an osteoclast differentiation and activation factor TNFSF11. This leads to disruption of TNFSF11-induced Ca(2+) signaling and impairment of TNFSF11-mediated nuclear translocation and activation of transcription factor NFATC1 which regulates genes important for osteoclast differentiation and function. Mediates cell adhesion via its binding to cell surface receptors integrins ITGAV:ITGB3 and ITGA5:ITGB1. Binds heparin and this interaction plays an important role in the assembly of microfibrils. Functionally, hormone that targets the liver to increase plasma glucose levels. Secreted by white adipose tissue and circulates in the plasma. Acts in response to fasting and promotes blood glucose elevation by binding to the surface of hepatocytes. Promotes hepatocyte glucose release by activating the protein kinase A activity in the liver, resulting in rapid glucose release into the circulation. In Bos taurus (Bovine), this protein is Fibrillin-1.